The chain runs to 95 residues: Late cornified envelope protein 7A (95 aa).

This sequence belongs to the LCE family.

Functionally, precursors of the cornified envelope of the stratum corneum. The polypeptide is Late cornified envelope protein 7A (Homo sapiens (Human)).